Consider the following 1291-residue polypeptide: Vacuolating cytotoxin autotransporter (1291 aa).

Positions 1 to 33 (MEIQQTHRKINRPLVSLALVGALVSITPQQSHA) are cleaved as a signal peptide. The disordered stretch occupies residues 326-374 (PPEGGYKDKPNDKPSNTTQNNAKNDKQESSQNNSNTQVINPPNSAQKTE). 2 stretches are compositionally biased toward polar residues: residues 338–347 (KPSNTTQNNA) and 354–374 (SSQN…QKTE). Residues 1018-1291 (KYEKPTNVWA…ASNLGMRYSF (274 aa)) form the Autotransporter domain.

Its subcellular location is the periplasm. The protein localises to the secreted. It localises to the cell surface. It is found in the cell outer membrane. Its function is as follows. Induces vacuolation of eukaryotic cells. Causes ulceration and gastric lesions. In Helicobacter pylori (Campylobacter pylori), this protein is Vacuolating cytotoxin autotransporter (vacA).